Here is a 476-residue protein sequence, read N- to C-terminus: Serine/threonine-protein kinase PknF (476 aa).

Positions 12–279 (FTIVRQLGSG…FARALGHRLG (268 aa)) constitute a Protein kinase domain. ATP-binding positions include 18–26 (LGSGGMGEV) and K41. The active-site Proton acceptor is the D137. The chain crosses the membrane as a helical span at residues 306 to 326 (TAVIVPAVLAMLLVMAVAVAV). Residues 332-376 (ADDERAAQPARTRTTTSAGTTTSVAPASTTRPAPTTPTTTGAADT) are disordered. The segment covering 338–376 (AQPARTRTTTSAGTTTSVAPASTTRPAPTTPTTTGAADT) has biased composition (low complexity).

Belongs to the protein kinase superfamily. Ser/Thr protein kinase family. In terms of processing, autophosphorylated. Dephosphorylated by PstP.

The protein localises to the cell membrane. It carries out the reaction L-seryl-[protein] + ATP = O-phospho-L-seryl-[protein] + ADP + H(+). The catalysed reaction is L-threonyl-[protein] + ATP = O-phospho-L-threonyl-[protein] + ADP + H(+). A serine/threonine-protein kinase, acts on HupB in vitro. The sequence is that of Serine/threonine-protein kinase PknF from Mycobacterium tuberculosis (strain ATCC 25177 / H37Ra).